The sequence spans 378 residues: Anhydro-N-acetylmuramic acid kinase (378 aa).

22-29 (GTSLDGAD) lines the ATP pocket.

It belongs to the anhydro-N-acetylmuramic acid kinase family.

The catalysed reaction is 1,6-anhydro-N-acetyl-beta-muramate + ATP + H2O = N-acetyl-D-muramate 6-phosphate + ADP + H(+). The protein operates within amino-sugar metabolism; 1,6-anhydro-N-acetylmuramate degradation. It participates in cell wall biogenesis; peptidoglycan recycling. Functionally, catalyzes the specific phosphorylation of 1,6-anhydro-N-acetylmuramic acid (anhMurNAc) with the simultaneous cleavage of the 1,6-anhydro ring, generating MurNAc-6-P. Is required for the utilization of anhMurNAc either imported from the medium or derived from its own cell wall murein, and thus plays a role in cell wall recycling. This is Anhydro-N-acetylmuramic acid kinase from Bordetella petrii (strain ATCC BAA-461 / DSM 12804 / CCUG 43448).